Reading from the N-terminus, the 34-residue chain is Colipase (34 aa).

Intrachain disulfides connect C12/C23 and C18/C34.

It belongs to the colipase family. Forms a 1:1 stoichiometric complex with pancreatic lipase. In terms of tissue distribution, expressed by the pancreas.

Its subcellular location is the secreted. Its function is as follows. Colipase is a cofactor of pancreatic lipase. It allows the lipase to anchor itself to the lipid-water interface. Without colipase the enzyme is washed off by bile salts, which have an inhibitory effect on the lipase. This is Colipase (CLPS) from Gallus gallus (Chicken).